A 106-amino-acid polypeptide reads, in one-letter code: Immunoglobulin lambda constant 2 (106 aa).

In terms of domain architecture, Ig-like spans 7–101 (PSVTLFPPSS…EGSTVEKTVA (95 aa)). Cys28 and Cys87 are joined by a disulfide.

As to quaternary structure, immunoglobulins are composed of two identical heavy chains and two identical light chains; disulfide-linked.

Its subcellular location is the secreted. The protein resides in the cell membrane. In terms of biological role, constant region of immunoglobulin light chains. Immunoglobulins, also known as antibodies, are membrane-bound or secreted glycoproteins produced by B lymphocytes. In the recognition phase of humoral immunity, the membrane-bound immunoglobulins serve as receptors which, upon binding of a specific antigen, trigger the clonal expansion and differentiation of B lymphocytes into immunoglobulins-secreting plasma cells. Secreted immunoglobulins mediate the effector phase of humoral immunity, which results in the elimination of bound antigens. The antigen binding site is formed by the variable domain of one heavy chain, together with that of its associated light chain. Thus, each immunoglobulin has two antigen binding sites with remarkable affinity for a particular antigen. The variable domains are assembled by a process called V-(D)-J rearrangement and can then be subjected to somatic hypermutations which, after exposure to antigen and selection, allow affinity maturation for a particular antigen. This is Immunoglobulin lambda constant 2 from Homo sapiens (Human).